We begin with the raw amino-acid sequence, 243 residues long: GrpE protein homolog, mitochondrial (243 aa).

A disordered region spans residues 42 to 75; it reads TEASKKEGKEDKAEAQGSQEPETAAETNKEAEGA. Over residues 44–55 the composition is skewed to basic and acidic residues; the sequence is ASKKEGKEDKAE.

This sequence belongs to the GrpE family. In terms of assembly, component of the PAM complex, at least composed of mtHsp70, MGE1, TIM44, PAM16, PAM17 and PAM18.

Its subcellular location is the mitochondrion matrix. Essential component of the PAM complex, a complex required for the translocation of transit peptide-containing proteins from the inner membrane into the mitochondrial matrix in an ATP-dependent manner. Seems to control the nucleotide-dependent binding of SSC1 to substrate proteins. This is GrpE protein homolog, mitochondrial (mge1) from Debaryomyces hansenii (strain ATCC 36239 / CBS 767 / BCRC 21394 / JCM 1990 / NBRC 0083 / IGC 2968) (Yeast).